We begin with the raw amino-acid sequence, 425 residues long: Glutamyl-tRNA reductase (425 aa).

Substrate-binding positions include 49 to 52, Ser107, 112 to 114, and Gln118; these read TCNR and EPQ. Catalysis depends on Cys50, which acts as the Nucleophile. 187-192 contacts NADP(+); sequence GAGETI.

The protein belongs to the glutamyl-tRNA reductase family. Homodimer.

It carries out the reaction (S)-4-amino-5-oxopentanoate + tRNA(Glu) + NADP(+) = L-glutamyl-tRNA(Glu) + NADPH + H(+). It functions in the pathway porphyrin-containing compound metabolism; protoporphyrin-IX biosynthesis; 5-aminolevulinate from L-glutamyl-tRNA(Glu): step 1/2. In terms of biological role, catalyzes the NADPH-dependent reduction of glutamyl-tRNA(Glu) to glutamate 1-semialdehyde (GSA). The chain is Glutamyl-tRNA reductase from Pseudomonas putida (strain ATCC 47054 / DSM 6125 / CFBP 8728 / NCIMB 11950 / KT2440).